A 202-amino-acid chain; its full sequence is Recombination protein RecR (202 aa).

Residues 61–76 (CARCNSFTEDEVCATC) form a C4-type zinc finger. The 96-residue stretch at 84-179 (GLLCIVETPA…KVTRLARGVP (96 aa)) folds into the Toprim domain.

Belongs to the RecR family.

May play a role in DNA repair. It seems to be involved in an RecBC-independent recombinational process of DNA repair. It may act with RecF and RecO. In Bordetella pertussis (strain Tohama I / ATCC BAA-589 / NCTC 13251), this protein is Recombination protein RecR.